The primary structure comprises 908 residues: MVCEGKRLASCPCFFLLTAKFYWILTMMQRTHSQEYAHSIRVDGDIILGGLFPVHAKGERGVPCGELKKEKGIHRLEAMLYAIDQINKDPDLLSNITLGVRILDTCSRDTYALEQSLTFVQALIEKDASDVKCANGDPPIFTKPDKISGVIGAAASSVSIMVANILRLFKIPQISYASTAPELSDNTRYDFFSRVVPPDSYQAQAMVDIVTALGWNYVSTLASEGNYGESGVEAFTQISREIGGVCIAQSQKIPREPRPGEFEKIIKRLLETPNARAVIMFANEDDIRRILEAAKKLNQSGHFLWIGSDSWGSKIAPVYQQEEIAEGAVTILPKRASIDGFDRYFRSRTLANNRRNVWFAEFWEENFGCKLGSHGKRNSHIKKCTGLERIARDSSYEQEGKVQFVIDAVYSMAYALHNMHKERCPGYIGLCPRMVTIDGKELLGYIRAVNFNGSAGTPVTFNENGDAPGRYDIFQYQINNKSTEYKIIGHWTNQLHLKVEDMQWANREHTHPASVCSLPCKPGERKKTVKGVPCCWHCERCEGYNYQVDELSCELCPLDQRPNINRTGCQRIPIIKLEWHSPWAVVPVFIAILGIIATTFVIVTFVRYNDTPIVRASGRELSYVLLTGIFLCYSITFLMIAAPDTIICSFRRIFLGLGMCFSYAALLTKTNRIHRIFEQGKKSVTAPKFISPASQLVITFSLISVQLLGVFVWFVVDPPHTIIDYGEQRTLDPENARGVLKCDISDLSLICSLGYSILLMVTCTVYAIKTRGVPETFNEAKPIGFTMYTTCIIWLAFIPIFFGTAQSAEKMYIQTTTLTVSMSLSASVSLGMLYMPKVYIIIFHPEQNVQKRKRSFKAVVTAATMQSKLIQKGNDRPNGEVKSELCESLETNTSSTKTTYISYSNHSI.

The signal sequence occupies residues 1–33; sequence MVCEGKRLASCPCFFLLTAKFYWILTMMQRTHS. Topologically, residues 34 to 583 are extracellular; that stretch reads QEYAHSIRVD…IIKLEWHSPW (550 aa). C64 and C106 are joined by a disulfide. The N-linked (GlcNAc...) asparagine glycan is linked to N95. Residues S156, 177–179, and Y227 each bind L-glutamate; that span reads AST. Intrachain disulfides connect C246–C534, C369–C384, C424–C431, C516–C535, C520–C538, C541–C553, and C556–C569. N-linked (GlcNAc...) asparagine glycosylation is present at N298. D309 contributes to the L-glutamate binding site. Position 401 (K401) interacts with L-glutamate. N452 and N480 each carry an N-linked (GlcNAc...) asparagine glycan. N565 carries an N-linked (GlcNAc...) asparagine glycan. A helical transmembrane segment spans residues 584-608; sequence AVVPVFIAILGIIATTFVIVTFVRY. Topologically, residues 609-620 are cytoplasmic; the sequence is NDTPIVRASGRE. A helical transmembrane segment spans residues 621–641; it reads LSYVLLTGIFLCYSITFLMIA. At 642 to 647 the chain is on the extracellular side; that stretch reads APDTII. A helical transmembrane segment spans residues 648–668; that stretch reads CSFRRIFLGLGMCFSYAALLT. Over 669 to 695 the chain is Cytoplasmic; the sequence is KTNRIHRIFEQGKKSVTAPKFISPASQ. A helical transmembrane segment spans residues 696-716; it reads LVITFSLISVQLLGVFVWFVV. Topologically, residues 717-746 are extracellular; the sequence is DPPHTIIDYGEQRTLDPENARGVLKCDISD. Residues 747 to 768 traverse the membrane as a helical segment; it reads LSLICSLGYSILLMVTCTVYAI. At 769 to 781 the chain is on the cytoplasmic side; it reads KTRGVPETFNEAK. The helical transmembrane segment at 782–803 threads the bilayer; sequence PIGFTMYTTCIIWLAFIPIFFG. At 804 to 818 the chain is on the extracellular side; the sequence is TAQSAEKMYIQTTTL. Residues 819 to 843 traverse the membrane as a helical segment; sequence TVSMSLSASVSLGMLYMPKVYIIIF. Topologically, residues 844–908 are cytoplasmic; sequence HPEQNVQKRK…TYISYSNHSI (65 aa). Residue K882 forms a Glycyl lysine isopeptide (Lys-Gly) (interchain with G-Cter in SUMO1) linkage.

This sequence belongs to the G-protein coupled receptor 3 family. In terms of assembly, interacts with PICK1. As to expression, prominent expression in olfactory bulb, pontine gray, lateral reticular nucleus of the thalamus, and piriform cortex. Less abundant expression incerebral cortex, hippocampus, cerebellum, and mammillary body.

It localises to the cell membrane. In terms of biological role, G-protein coupled receptor for glutamate. Ligand binding causes a conformation change that triggers signaling via guanine nucleotide-binding proteins (G proteins) and modulates the activity of down-stream effectors. Signaling inhibits adenylate cyclase activity. The polypeptide is Metabotropic glutamate receptor 8 (Grm8) (Rattus norvegicus (Rat)).